The primary structure comprises 89 residues: Small ribosomal subunit protein uS15 (89 aa).

It belongs to the universal ribosomal protein uS15 family. As to quaternary structure, part of the 30S ribosomal subunit. Forms a bridge to the 50S subunit in the 70S ribosome, contacting the 23S rRNA.

In terms of biological role, one of the primary rRNA binding proteins, it binds directly to 16S rRNA where it helps nucleate assembly of the platform of the 30S subunit by binding and bridging several RNA helices of the 16S rRNA. Its function is as follows. Forms an intersubunit bridge (bridge B4) with the 23S rRNA of the 50S subunit in the ribosome. In Mycobacterium avium (strain 104), this protein is Small ribosomal subunit protein uS15.